A 129-amino-acid polypeptide reads, in one-letter code: Mini-ribonuclease 3-like protein (129 aa).

The active site involves D23.

It belongs to the MrnC RNase family.

In terms of biological role, might be a ribonuclease involved in RNA processing. The sequence is that of Mini-ribonuclease 3-like protein (mrnCL) from Fusobacterium nucleatum subsp. nucleatum (strain ATCC 25586 / DSM 15643 / BCRC 10681 / CIP 101130 / JCM 8532 / KCTC 2640 / LMG 13131 / VPI 4355).